The sequence spans 952 residues: UvrABC system protein A (952 aa).

38–45 provides a ligand contact to ATP; the sequence is GLSGSGKS. The C4-type zinc-finger motif lies at 259–286; that stretch reads CDKCGFSISELEPRLFSFNSPLGSCSYC. ABC transporter domains are found at residues 316–595 and 615–944; these read FKNI…SNSI and GNGK…QYLS. 647–654 provides a ligand contact to ATP; the sequence is GVSGSGKS. The C4-type zinc-finger motif lies at 746–772; the sequence is CDKCFGDGVIRIEMHFLPDVYVKCEVC.

This sequence belongs to the ABC transporter superfamily. UvrA family. As to quaternary structure, forms a heterotetramer with UvrB during the search for lesions.

It localises to the cytoplasm. Its function is as follows. The UvrABC repair system catalyzes the recognition and processing of DNA lesions. UvrA is an ATPase and a DNA-binding protein. A damage recognition complex composed of 2 UvrA and 2 UvrB subunits scans DNA for abnormalities. When the presence of a lesion has been verified by UvrB, the UvrA molecules dissociate. The chain is UvrABC system protein A from Mycoplasma genitalium (strain ATCC 33530 / DSM 19775 / NCTC 10195 / G37) (Mycoplasmoides genitalium).